Consider the following 418-residue polypeptide: Delta(14)-sterol reductase TM7SF2 (418 aa).

The next 6 membrane-spanning stretches (helical) occupy residues 13–35 (FGGP…HLLL), 62–81 (ALLL…LLPA), 102–124 (GFQA…LPLS), 129–148 (MLLP…SLLL), 255–277 (FGFM…QAQF), and 287–304 (WPLA…YYIF). NADP(+) contacts are provided by residues lysine 311, arginine 315, leucine 338, tryptophan 343, and 350–351 (NY). A helical membrane pass occupies residues 355–377 (LIMALAWSLPCGVFHLLPYFYFL). NADP(+)-binding positions include aspartate 390, 394-398 (CRQKY), and tyrosine 405.

Belongs to the ERG4/ERG24 family. In terms of tissue distribution, highly expressed in liver and brain.

It localises to the microsome membrane. It is found in the endoplasmic reticulum membrane. It catalyses the reaction 4,4-dimethyl-5alpha-cholesta-8,24-dien-3beta-ol + NADP(+) = 4,4-dimethyl-5alpha-cholesta-8,14,24-trien-3beta-ol + NADPH + H(+). The catalysed reaction is 5alpha-cholest-8,14-dien-3beta-ol + NADPH + H(+) = 5alpha-cholest-8-en-3beta-ol + NADP(+). The enzyme catalyses 4,4-dimethyl-8,14-cholestadien-3beta-ol + NADPH + H(+) = 4,4-dimethyl-5alpha-cholest-8-en-3beta-ol + NADP(+). It functions in the pathway steroid biosynthesis; cholesterol biosynthesis. In terms of biological role, catalyzes the reduction of the C14-unsaturated bond of lanosterol, as part of the metabolic pathway leading to cholesterol biosynthesis. The protein is Delta(14)-sterol reductase TM7SF2 (TM7SF2) of Bos taurus (Bovine).